The following is a 1213-amino-acid chain: DNA-directed RNA polymerase subunit beta (1213 aa).

The tract at residues Ser1169–Lys1213 is disordered. Basic and acidic residues predominate over residues Met1171 to Lys1199.

The protein belongs to the RNA polymerase beta chain family. As to quaternary structure, the RNAP catalytic core consists of 2 alpha, 1 beta, 1 beta' and 1 omega subunit. When a sigma factor is associated with the core the holoenzyme is formed, which can initiate transcription.

It catalyses the reaction RNA(n) + a ribonucleoside 5'-triphosphate = RNA(n+1) + diphosphate. DNA-dependent RNA polymerase catalyzes the transcription of DNA into RNA using the four ribonucleoside triphosphates as substrates. The sequence is that of DNA-directed RNA polymerase subunit beta from Lactobacillus helveticus (strain DPC 4571).